Consider the following 248-residue polypeptide: ATP synthase subunit a (248 aa).

The next 5 helical transmembrane spans lie at 31–51 (GQVL…VLLG), 90–110 (VPYV…GNLF), 129–149 (INTT…AGIS), 195–215 (VIAV…MILF), and 216–236 (LFTG…YIGE).

The protein belongs to the ATPase A chain family. As to quaternary structure, F-type ATPases have 2 components, CF(1) - the catalytic core - and CF(0) - the membrane proton channel. CF(1) has five subunits: alpha(3), beta(3), gamma(1), delta(1), epsilon(1). CF(0) has four main subunits: a, b, b' and c.

The protein resides in the cellular thylakoid membrane. Key component of the proton channel; it plays a direct role in the translocation of protons across the membrane. This is ATP synthase subunit a from Synechococcus sp. (strain JA-3-3Ab) (Cyanobacteria bacterium Yellowstone A-Prime).